We begin with the raw amino-acid sequence, 179 residues long: NADH-quinone oxidoreductase subunit B (179 aa).

Positions 53, 54, 118, and 148 each coordinate [4Fe-4S] cluster.

This sequence belongs to the complex I 20 kDa subunit family. NDH-1 is composed of 14 different subunits. Subunits NuoB, C, D, E, F, and G constitute the peripheral sector of the complex. It depends on [4Fe-4S] cluster as a cofactor.

It localises to the cell membrane. It carries out the reaction a quinone + NADH + 5 H(+)(in) = a quinol + NAD(+) + 4 H(+)(out). In terms of biological role, NDH-1 shuttles electrons from NADH, via FMN and iron-sulfur (Fe-S) centers, to quinones in the respiratory chain. The immediate electron acceptor for the enzyme in this species is believed to be a menaquinone. Couples the redox reaction to proton translocation (for every two electrons transferred, four hydrogen ions are translocated across the cytoplasmic membrane), and thus conserves the redox energy in a proton gradient. The sequence is that of NADH-quinone oxidoreductase subunit B from Bacillus thuringiensis (strain Al Hakam).